Consider the following 291-residue polypeptide: HTH-type transcriptional activator AmpR (291 aa).

The 58-residue stretch at 6 to 63 (LPLNSLRAFEAAARHLSFTHAAIELNVTHSAISQHVKTLEQHLNCQLFVRVSRGLMLT) folds into the HTH lysR-type domain. A DNA-binding region (H-T-H motif) is located at residues 23 to 42 (FTHAAIELNVTHSAISQHVK).

It belongs to the LysR transcriptional regulatory family.

It localises to the cytoplasm. Its function is as follows. This protein is a positive regulator of gene expression of cephalosporinase (AmpC). This chain is HTH-type transcriptional activator AmpR (ampR), found in Enterobacter cloacae.